A 368-amino-acid polypeptide reads, in one-letter code: UDP-N-acetylglucosamine--N-acetylmuramyl-(pentapeptide) pyrophosphoryl-undecaprenol N-acetylglucosamine transferase (368 aa).

Residues 10–12 (TGG), N124, S196, I251, and Q296 each bind UDP-N-acetyl-alpha-D-glucosamine.

Belongs to the glycosyltransferase 28 family. MurG subfamily.

The protein resides in the cell membrane. It carries out the reaction Mur2Ac(oyl-L-Ala-gamma-D-Glu-L-Lys-D-Ala-D-Ala)-di-trans,octa-cis-undecaprenyl diphosphate + UDP-N-acetyl-alpha-D-glucosamine = beta-D-GlcNAc-(1-&gt;4)-Mur2Ac(oyl-L-Ala-gamma-D-Glu-L-Lys-D-Ala-D-Ala)-di-trans,octa-cis-undecaprenyl diphosphate + UDP + H(+). The protein operates within cell wall biogenesis; peptidoglycan biosynthesis. Functionally, cell wall formation. Catalyzes the transfer of a GlcNAc subunit on undecaprenyl-pyrophosphoryl-MurNAc-pentapeptide (lipid intermediate I) to form undecaprenyl-pyrophosphoryl-MurNAc-(pentapeptide)GlcNAc (lipid intermediate II). The polypeptide is UDP-N-acetylglucosamine--N-acetylmuramyl-(pentapeptide) pyrophosphoryl-undecaprenol N-acetylglucosamine transferase (Limosilactobacillus fermentum (strain NBRC 3956 / LMG 18251) (Lactobacillus fermentum)).